Consider the following 157-residue polypeptide: Arginine regulator (157 aa).

This sequence belongs to the ArgR family.

It is found in the cytoplasm. The protein operates within amino-acid degradation; L-arginine degradation via ADI pathway. In terms of biological role, regulates the transcription of the arc operon, involved in arginine catabolism. The chain is Arginine regulator (argR1) from Streptococcus pyogenes serotype M3 (strain SSI-1).